The chain runs to 365 residues: DNA replication and repair protein RecF (365 aa).

30-37 (GRNAQGKT) serves as a coordination point for ATP.

It belongs to the RecF family.

It is found in the cytoplasm. Functionally, the RecF protein is involved in DNA metabolism; it is required for DNA replication and normal SOS inducibility. RecF binds preferentially to single-stranded, linear DNA. It also seems to bind ATP. The protein is DNA replication and repair protein RecF of Streptococcus pneumoniae (strain 70585).